Here is a 153-residue protein sequence, read N- to C-terminus: uncharacterized protein (153 aa).

An N-terminal signal peptide occupies residues 1-21; that stretch reads MKITITSLLFFLVMIVELASA.

This is an uncharacterized protein from Saccharomyces cerevisiae (strain ATCC 204508 / S288c) (Baker's yeast).